The sequence spans 168 residues: Cell division inhibitor SulA (168 aa).

Positions 105 to 111 (ALQTGNY) are ftsZ binding.

This sequence belongs to the SulA family. In terms of assembly, interacts with FtsZ. Post-translationally, is rapidly cleaved and degraded by the Lon protease once DNA damage is repaired.

Component of the SOS system and an inhibitor of cell division. Accumulation of SulA causes rapid cessation of cell division and the appearance of long, non-septate filaments. In the presence of GTP, binds a polymerization-competent form of FtsZ in a 1:1 ratio, thus inhibiting FtsZ polymerization and therefore preventing it from participating in the assembly of the Z ring. This mechanism prevents the premature segregation of damaged DNA to daughter cells during cell division. The chain is Cell division inhibitor SulA from Erwinia pyrifoliae (strain DSM 12163 / CIP 106111 / Ep16/96).